The chain runs to 373 residues: Putative gustatory receptor 10b (373 aa).

The Cytoplasmic portion of the chain corresponds to 1 to 8 (MRVGKLCR). A helical membrane pass occupies residues 9–29 (LALRFWMGLILVLGFSSHYYN). Residues 30-82 (PTRRRLVYSRILQTYDWLLMVINLGAFYLYYRYAMTYFLEGMFRRQGFVNQVS) are Extracellular-facing. A helical transmembrane segment spans residues 83–103 (TCNVFQQLLMAVTGTWLHFLF). Residues 104 to 132 (ERHVCQTYNELSRILKHDLKLKEHSRFYC) are Cytoplasmic-facing. Residues 133–153 (LAFLAKVYNFFHNFNFALSAI) traverse the membrane as a helical segment. Topologically, residues 154-170 (MHWGLRPFNVWDLLANL) are extracellular. A helical transmembrane segment spans residues 171 to 191 (YFVYNSLARDAILVAYVLLLL). At 192–230 (NLSEALRLNGQQEHDTYSDLMKQLRRRERLLRIGRRVHR) the chain is on the cytoplasmic side. Residues 231 to 251 (MFAWLVAIALIYLVFFNTATI) form a helical membrane-spanning segment. Residues 252–273 (YLGYTMFIQKHDALGLRGRGLK) are Extracellular-facing. The chain crosses the membrane as a helical span at residues 274-294 (MLLTVVSFLVILWDVVLLQVI). The Cytoplasmic portion of the chain corresponds to 295–350 (CEKLLAEENKICDCPEDVASSRTTYRQWEMSALRRAITRSSPENNVLGMFRMDMRC). A helical transmembrane segment spans residues 351-371 (AFALISCSLSYGIIIIQIGYI). The Extracellular segment spans residues 372–373 (PG).

Belongs to the insect chemoreceptor superfamily. Gustatory receptor (GR) family. Gr10a subfamily.

The protein resides in the cell membrane. In terms of biological role, probable gustatory receptor which mediates acceptance or avoidance behavior, depending on its substrates. This chain is Putative gustatory receptor 10b (Gr10b), found in Drosophila melanogaster (Fruit fly).